The chain runs to 179 residues: Large ribosomal subunit protein uL5 (179 aa).

N6-acetyllysine is present on Lys-3.

The protein belongs to the universal ribosomal protein uL5 family. As to quaternary structure, part of the 50S ribosomal subunit; part of the 5S rRNA/L5/L18/L25 subcomplex. Contacts the 5S rRNA and the P site tRNA. Forms a bridge to the 30S subunit in the 70S ribosome.

In terms of biological role, this is one of the proteins that bind and probably mediate the attachment of the 5S RNA into the large ribosomal subunit, where it forms part of the central protuberance. In the 70S ribosome it contacts protein S13 of the 30S subunit (bridge B1b), connecting the 2 subunits; this bridge is implicated in subunit movement. Contacts the P site tRNA; the 5S rRNA and some of its associated proteins might help stabilize positioning of ribosome-bound tRNAs. This chain is Large ribosomal subunit protein uL5, found in Shigella flexneri.